Here is a 445-residue protein sequence, read N- to C-terminus: Methionine aminopeptidase 2 (445 aa).

A disordered region spans residues 1–89; sequence MAAQAPVDEI…DPPRVLISQL (89 aa). Residues 60–74 show a composition bias toward basic residues; that stretch reads AKKKKKRKPKKKKKN. H198 contacts substrate. The a divalent metal cation site is built by D218, D229, and H298. Residue H306 participates in substrate binding. A divalent metal cation-binding residues include E331 and E426.

Belongs to the peptidase M24A family. Methionine aminopeptidase eukaryotic type 2 subfamily. Co(2+) is required as a cofactor. It depends on Zn(2+) as a cofactor. The cofactor is Mn(2+). Requires Fe(2+) as cofactor.

It is found in the cytoplasm. The enzyme catalyses Release of N-terminal amino acids, preferentially methionine, from peptides and arylamides.. Functionally, cotranslationally removes the N-terminal methionine from nascent proteins. The N-terminal methionine is often cleaved when the second residue in the primary sequence is small and uncharged (Met-Ala-, Cys, Gly, Pro, Ser, Thr, or Val). The sequence is that of Methionine aminopeptidase 2 from Podospora anserina (strain S / ATCC MYA-4624 / DSM 980 / FGSC 10383) (Pleurage anserina).